An 83-amino-acid polypeptide reads, in one-letter code: Bowman-Birk type proteinase inhibitor (83 aa).

Intrachain disulfides connect C18–C72, C19–C34, C22–C68, C24–C32, C42–C49, C46–C61, and C51–C59.

It belongs to the Bowman-Birk serine protease inhibitor family.

The chain is Bowman-Birk type proteinase inhibitor from Phaseolus lunatus (Lima bean).